The chain runs to 584 residues: Phenylalanine--tRNA ligase beta subunit (584 aa).

A B5 domain is found at 290–369 (FSVRTKTVTH…RALGFNSLEP (80 aa)). The Mg(2+) site is built by aspartate 347, aspartate 353, aspartate 356, and aspartate 357.

This sequence belongs to the phenylalanyl-tRNA synthetase beta subunit family. Type 2 subfamily. As to quaternary structure, tetramer of two alpha and two beta subunits. Mg(2+) is required as a cofactor.

It localises to the cytoplasm. The catalysed reaction is tRNA(Phe) + L-phenylalanine + ATP = L-phenylalanyl-tRNA(Phe) + AMP + diphosphate + H(+). This Haloarcula marismortui (strain ATCC 43049 / DSM 3752 / JCM 8966 / VKM B-1809) (Halobacterium marismortui) protein is Phenylalanine--tRNA ligase beta subunit.